We begin with the raw amino-acid sequence, 591 residues long: Putative BTB/POZ domain-containing protein At5g13600 (591 aa).

Positions 28 to 95 constitute a BTB domain; it reads PDVMIQVVDE…CYGVRIEVTP (68 aa). Positions 208–493 constitute an NPH3 domain; it reads NWWFNDVSSF…VQVLFFEQMR (286 aa). Tyrosine 434 is subject to Phosphotyrosine.

It belongs to the NPH3 family.

It functions in the pathway protein modification; protein ubiquitination. May act as a substrate-specific adapter of an E3 ubiquitin-protein ligase complex (CUL3-RBX1-BTB) which mediates the ubiquitination and subsequent proteasomal degradation of target proteins. The sequence is that of Putative BTB/POZ domain-containing protein At5g13600 from Arabidopsis thaliana (Mouse-ear cress).